The sequence spans 225 residues: NAD(P)H-quinone oxidoreductase subunit K, chloroplastic (225 aa).

C43, C44, C108, and C139 together coordinate [4Fe-4S] cluster.

Belongs to the complex I 20 kDa subunit family. In terms of assembly, NDH is composed of at least 16 different subunits, 5 of which are encoded in the nucleus. [4Fe-4S] cluster is required as a cofactor.

The protein resides in the plastid. Its subcellular location is the chloroplast thylakoid membrane. It carries out the reaction a plastoquinone + NADH + (n+1) H(+)(in) = a plastoquinol + NAD(+) + n H(+)(out). The catalysed reaction is a plastoquinone + NADPH + (n+1) H(+)(in) = a plastoquinol + NADP(+) + n H(+)(out). In terms of biological role, NDH shuttles electrons from NAD(P)H:plastoquinone, via FMN and iron-sulfur (Fe-S) centers, to quinones in the photosynthetic chain and possibly in a chloroplast respiratory chain. The immediate electron acceptor for the enzyme in this species is believed to be plastoquinone. Couples the redox reaction to proton translocation, and thus conserves the redox energy in a proton gradient. This chain is NAD(P)H-quinone oxidoreductase subunit K, chloroplastic, found in Arabidopsis thaliana (Mouse-ear cress).